Here is a 2262-residue protein sequence, read N- to C-terminus: Protein Ycf2 (2262 aa).

An ATP-binding site is contributed by 1607–1614 (GFIGTGRS).

It belongs to the Ycf2 family.

It is found in the plastid. It localises to the chloroplast stroma. Functionally, probable ATPase of unknown function. Its presence in a non-photosynthetic plant (Epifagus virginiana) and experiments in tobacco indicate that it has an essential function which is probably not related to photosynthesis. This chain is Protein Ycf2, found in Nuphar advena (Common spatterdock).